A 518-amino-acid chain; its full sequence is MNSQVIIFDTTLRDGEQALQASLSVKQKLQIALSLENTGIDIIEVGFPISSPGDFKSVQTISKNIKNSRICSLARCLDKDIDAAAEAMHSSNAFRIHIFLATSILHMESKLKKNFDQIIDMAITSVKRALRYTDDVEFSCEDASRTTMDNLCRIVEKLINAGVKTINIPDTVGYTVPNELSSIIHNLFQRVPNIDKSIISVHCHNDLGMAVGNSISAIQAGARQIEGTINGIGERAGNTALEEVIIAIKVREDVLGVSTKIKHKEIYRTSQIISQICNLPIPPNKAIVGSNAFAHSSGIHQDGVLKNRKNYEIMEPSSIGLKEVKLNLTSRSGRAAVKHYMTEMGYRECDYKIDELYASFLKLADKKGQVFDYDLEALAFINQQQEELEHFSLSFFSVQSISNGLSTASVKLLCGKKTFIESATTSNGPIDAIYQALNRITHFPIILQKYQLIAKGKGKDALGQVDILVEHKKRKFHGMGLATDIIESSAQAMVNVLNNIWKANQVNEKLKKLKKINN.

The Pyruvate carboxyltransferase domain maps to Val5–Tyr267. Residues Asp14, His202, His204, and Asn238 each contribute to the Mn(2+) site. The tract at residues Ser392–Asn518 is regulatory domain.

It belongs to the alpha-IPM synthase/homocitrate synthase family. LeuA type 1 subfamily. In terms of assembly, homodimer. Mn(2+) is required as a cofactor.

The protein resides in the cytoplasm. The enzyme catalyses 3-methyl-2-oxobutanoate + acetyl-CoA + H2O = (2S)-2-isopropylmalate + CoA + H(+). It functions in the pathway amino-acid biosynthesis; L-leucine biosynthesis; L-leucine from 3-methyl-2-oxobutanoate: step 1/4. Functionally, catalyzes the condensation of the acetyl group of acetyl-CoA with 3-methyl-2-oxobutanoate (2-ketoisovalerate) to form 3-carboxy-3-hydroxy-4-methylpentanoate (2-isopropylmalate). In Buchnera aphidicola subsp. Rhopalosiphum padi, this protein is 2-isopropylmalate synthase.